The sequence spans 324 residues: Methionyl-tRNA formyltransferase (324 aa).

Residue 114–117 participates in (6S)-5,6,7,8-tetrahydrofolate binding; that stretch reads SLLP.

Belongs to the Fmt family.

It carries out the reaction L-methionyl-tRNA(fMet) + (6R)-10-formyltetrahydrofolate = N-formyl-L-methionyl-tRNA(fMet) + (6S)-5,6,7,8-tetrahydrofolate + H(+). Functionally, attaches a formyl group to the free amino group of methionyl-tRNA(fMet). The formyl group appears to play a dual role in the initiator identity of N-formylmethionyl-tRNA by promoting its recognition by IF2 and preventing the misappropriation of this tRNA by the elongation apparatus. The sequence is that of Methionyl-tRNA formyltransferase from Phocaeicola vulgatus (strain ATCC 8482 / DSM 1447 / JCM 5826 / CCUG 4940 / NBRC 14291 / NCTC 11154) (Bacteroides vulgatus).